The chain runs to 394 residues: G2/mitotic-specific cyclin-B2 (394 aa).

This sequence belongs to the cyclin family. Cyclin AB subfamily. As to quaternary structure, interacts with the CDK1 protein kinase to form a serine/threonine kinase holoenzyme complex also known as maturation promoting factor (MPF). The cyclin subunit imparts substrate specificity to the complex.

Its function is as follows. Essential for the control of the cell cycle at the G2/M (mitosis) transition. The polypeptide is G2/mitotic-specific cyclin-B2 (ccnb2) (Anguilla japonica (Japanese eel)).